A 351-amino-acid chain; its full sequence is N-acetyl-gamma-glutamyl-phosphate reductase (351 aa).

The active site involves cysteine 154.

Belongs to the NAGSA dehydrogenase family. Type 1 subfamily.

It is found in the cytoplasm. The catalysed reaction is N-acetyl-L-glutamate 5-semialdehyde + phosphate + NADP(+) = N-acetyl-L-glutamyl 5-phosphate + NADPH + H(+). The protein operates within amino-acid biosynthesis; L-arginine biosynthesis; N(2)-acetyl-L-ornithine from L-glutamate: step 3/4. In terms of biological role, catalyzes the NADPH-dependent reduction of N-acetyl-5-glutamyl phosphate to yield N-acetyl-L-glutamate 5-semialdehyde. This is N-acetyl-gamma-glutamyl-phosphate reductase from Prochlorococcus marinus (strain MIT 9301).